A 274-amino-acid chain; its full sequence is MQKVVKLNNIKIGNDLPFVLITGPCQIEGKDHALFMAEKLVKLTSKLEIPFIYKSSFDKANRTSVHGIRGVGIEKGLEILSKVKSEFDCPIVTDVHSESQCTETAEVADILQIPAFLCRQTDLLQAAAKTGKIVKVKKGQFLAPWDMKNVQTKLEAFGVKDILFTERGACFGYNNLVSDMRSLAIMAELNVPVVFDATHSVQQPGGLGGSTGGERKYVELLAKAATSVGIAGIYMEVHQDPDNAPSDGPCMMKLDNLESILIKLKKYDKITKEK.

Belongs to the KdsA family.

The protein localises to the cytoplasm. It carries out the reaction D-arabinose 5-phosphate + phosphoenolpyruvate + H2O = 3-deoxy-alpha-D-manno-2-octulosonate-8-phosphate + phosphate. It functions in the pathway carbohydrate biosynthesis; 3-deoxy-D-manno-octulosonate biosynthesis; 3-deoxy-D-manno-octulosonate from D-ribulose 5-phosphate: step 2/3. It participates in bacterial outer membrane biogenesis; lipopolysaccharide biosynthesis. In Rickettsia conorii (strain ATCC VR-613 / Malish 7), this protein is 2-dehydro-3-deoxyphosphooctonate aldolase.